A 209-amino-acid polypeptide reads, in one-letter code: Large ribosomal subunit protein uL3 (209 aa).

Residues 133 to 152 form a disordered region; that stretch reads THGNSLSHRVPGSIGQNQTP. At Gln150 the chain carries N5-methylglutamine.

Belongs to the universal ribosomal protein uL3 family. In terms of assembly, part of the 50S ribosomal subunit. Forms a cluster with proteins L14 and L19. Methylated by PrmB.

Functionally, one of the primary rRNA binding proteins, it binds directly near the 3'-end of the 23S rRNA, where it nucleates assembly of the 50S subunit. The polypeptide is Large ribosomal subunit protein uL3 (Shigella sonnei (strain Ss046)).